Consider the following 312-residue polypeptide: Protoheme IX farnesyltransferase (312 aa).

9 helical membrane-spanning segments follow: residues 29 to 49 (VMSLVVFTGLVGLVVAPGHMN), 50 to 70 (PVLAAISILCVAVGAGASGAL), 90 to 110 (IPAGIIAPNQVLAFGLTLSAF), 117 to 137 (LMVNWLSAALLAFTIFFYAVV), 150 to 170 (IVIGGAAGAFPPMIGWAAATG), 177 to 197 (VVLFMIIFLWTPPHFWALSLF), 223 to 243 (ALFYSIIMAPVGVLPWVLGFA), 248 to 268 (GAISTLLGLAFVYYAWRMWVA), and 292 to 312 (LFAVLLVEALVMKALIAFGGF).

Belongs to the UbiA prenyltransferase family. Protoheme IX farnesyltransferase subfamily.

The protein localises to the cell inner membrane. It catalyses the reaction heme b + (2E,6E)-farnesyl diphosphate + H2O = Fe(II)-heme o + diphosphate. Its pathway is porphyrin-containing compound metabolism; heme O biosynthesis; heme O from protoheme: step 1/1. Functionally, converts heme B (protoheme IX) to heme O by substitution of the vinyl group on carbon 2 of heme B porphyrin ring with a hydroxyethyl farnesyl side group. This chain is Protoheme IX farnesyltransferase, found in Brucella anthropi (strain ATCC 49188 / DSM 6882 / CCUG 24695 / JCM 21032 / LMG 3331 / NBRC 15819 / NCTC 12168 / Alc 37) (Ochrobactrum anthropi).